The following is a 541-amino-acid chain: Halolysin-like extracellular serine protease Nep (541 aa).

The segment at residues 1-33 (MTRDTNSNVGRRSVLKAASALGAFLGLGGVASA) is a signal peptide (tat-type signal). The propeptide occupies 34-121 (TPGREPGPKK…DNATYETLEV (88 aa)). One can recognise a Peptidase S8 domain in the interval 130–405 (QYAPQQVNCE…YGRVDAELAV (276 aa)). Residues D157, H198, and S351 each act as charge relay system in the active site. The segment at 403–453 (LAVTTDPDNGDDDDDDDDDEDDPGDGECGDETNTATADGELSGGWGGNPSD) is disordered. Residues 410 to 432 (DNGDDDDDDDDDEDDPGDGECGD) are compositionally biased toward acidic residues.

It belongs to the peptidase S8 family. As to quaternary structure, monomer. In terms of processing, exported by the Tat system. The position of the signal peptide cleavage has not been experimentally proven. After transport across the membrane, the propeptide is probably processed autocatalytically, yielding the mature fully active protease.

The protein localises to the secreted. Dependent on high salt concentrations for activity and stability. Strongly inhibited by the serine protease inhibitors diisopropyl fluorophosphate (DFP), phenylmethyl sulfonylfluoride (PMSF) and chymostatin. Also inhibited by denaturing agents such as SDS, urea, and HCl guanidinium. Activated by thiol-containing reducing agents such as dithiotreitol (DTT) and 2-mercaptoethanol. Functionally, serine protease that hydrolyzes large proteins such as casein and gelatin. Cleaves preferentially at the carboxyl terminus of Phe, Tyr or Leu. Is also able to catalyze peptide synthesis under different salt concentrations in the presence of dimethyl sulfoxide (DMSO). The protein is Halolysin-like extracellular serine protease Nep of Natrialba magadii.